We begin with the raw amino-acid sequence, 564 residues long: Aspyridones efflux protein (564 aa).

Low complexity predominate over residues 1-17 (MHPDQADTAAMQQQTTT). The disordered stretch occupies residues 1–49 (MHPDQADTAAMQQQTTTECSDRSRPEKAEEGHAREHTVTRTCSREPEQT). Residues 19–47 (CSDRSRPEKAEEGHAREHTVTRTCSREPE) are compositionally biased toward basic and acidic residues. Helical transmembrane passes span 66–86 (AICLTIFLISVDFSILATAIP), 127–147 (WTFLLALLTFEVGSIICATAP), 158–178 (IAGCGNAGLLSGALLILTHSV), 185–205 (LFMAMTGGTYGVAAIAGPPLG), 216–236 (WCFWINLPIGALTFLVIVFLF), 260–280 (VGTLMFMPAIICVLLALQWGG), 287–307 (SGIVVALLVVGGVLVIAFGIV), 335–355 (FALGAAFFVFIYFLPIWFQGV), 368–388 (LPMLVGNIVATAVSGVLVTII), and 392–412 (APFMILGTILASVGAGLLLLF). Asn-415 is a glycosylation site (N-linked (GlcNAc...) asparagine). Transmembrane regions (helical) follow at residues 416–436 (VTAASWIGYQAIVGLGIGFGW) and 454–474 (IATATLSFAQTLGGTLFVSVA). An N-linked (GlcNAc...) asparagine glycan is attached at Asn-524. A helical transmembrane segment spans residues 528–548 (LSAFFVATIMAIMSLVGCTFV).

Belongs to the major facilitator superfamily. TCR/Tet family.

Its subcellular location is the cell membrane. Its function is as follows. Efflux pump that may be involved in the secretion of leporins. This Neocamarosporium betae (Beet black rot fungus) protein is Aspyridones efflux protein (TP).